The following is a 352-amino-acid chain: N-lysine methyltransferase KMT5A (352 aa).

Residues 21-51 are disordered; it reads AVAATAPGPEMVERRGPGRPRTNGENVFTGQ. Serine 59 carries the phosphoserine modification. A disordered region spans residues 87–202; the sequence is PLAGIYRKRD…KSKAELQSEE (116 aa). Positions 109–121 are enriched in basic and acidic residues; that stretch reads MKAEEQKIKDARR. Phosphothreonine is present on threonine 140. A compositionally biased stretch (basic residues) spans 156 to 172; that stretch reads GLKKPVRGKQAPRKKAQ. Residues 216–337 enclose the SET domain; sequence EGMKIDLIDG…AGEELLYDYG (122 aa). Residues 226 to 228, tyrosine 271, and 298 to 299 each bind S-adenosyl-L-methionine; these read KGR and NH.

This sequence belongs to the class V-like SAM-binding methyltransferase superfamily. Histone-lysine methyltransferase family. PR/SET subfamily. Interacts with L3MBTL1. Interacts with SIRT2 (phosphorylated form); the interaction is direct, stimulates KMT5A-mediated methyltransferase activity at histone H4 'Lys-20' (H4K20me1) and is increased in a H(2)O(2)-induced oxidative stress-dependent manner. In terms of processing, ubiquitinated and degraded by the DCX(DTL) complex.

The protein localises to the nucleus. It is found in the chromosome. The catalysed reaction is L-lysyl(20)-[histone H4] + S-adenosyl-L-methionine = N(6)-methyl-L-lysyl(20)-[histone H4] + S-adenosyl-L-homocysteine + H(+). It catalyses the reaction L-lysyl-[protein] + S-adenosyl-L-methionine = N(6)-methyl-L-lysyl-[protein] + S-adenosyl-L-homocysteine + H(+). Its function is as follows. Protein-lysine N-methyltransferase that monomethylates both histones and non-histone proteins. Specifically monomethylates 'Lys-20' of histone H4 (H4K20me1). H4K20me1 is enriched during mitosis and represents a specific tag for epigenetic transcriptional repression. Mainly functions in euchromatin regions, thereby playing a central role in the silencing of euchromatic genes. Required for cell proliferation, probably by contributing to the maintenance of proper higher-order structure of DNA during mitosis. Involved in chromosome condensation and proper cytokinesis. Nucleosomes are preferred as substrate compared to free histones. Mediates monomethylation of p53/TP53 at 'Lys-382', leading to repress p53/TP53-target genes. Plays a negative role in TGF-beta response regulation and a positive role in cell migration. The chain is N-lysine methyltransferase KMT5A from Bos taurus (Bovine).